The following is a 222-amino-acid chain: 7-cyano-7-deazaguanine synthase (222 aa).

Position 8 to 18 (8 to 18 (LSGGLDSATCL)) interacts with ATP. Zn(2+) is bound by residues cysteine 187, cysteine 197, cysteine 200, and cysteine 203.

Belongs to the QueC family. It depends on Zn(2+) as a cofactor.

It catalyses the reaction 7-carboxy-7-deazaguanine + NH4(+) + ATP = 7-cyano-7-deazaguanine + ADP + phosphate + H2O + H(+). It participates in purine metabolism; 7-cyano-7-deazaguanine biosynthesis. Functionally, catalyzes the ATP-dependent conversion of 7-carboxy-7-deazaguanine (CDG) to 7-cyano-7-deazaguanine (preQ(0)). This chain is 7-cyano-7-deazaguanine synthase, found in Alcanivorax borkumensis (strain ATCC 700651 / DSM 11573 / NCIMB 13689 / SK2).